The following is a 300-amino-acid chain: Ribosomal protein L11 methyltransferase (300 aa).

S-adenosyl-L-methionine-binding residues include T144, G165, D187, and N235.

The protein belongs to the methyltransferase superfamily. PrmA family.

Its subcellular location is the cytoplasm. The enzyme catalyses L-lysyl-[protein] + 3 S-adenosyl-L-methionine = N(6),N(6),N(6)-trimethyl-L-lysyl-[protein] + 3 S-adenosyl-L-homocysteine + 3 H(+). Methylates ribosomal protein L11. This Prochlorococcus marinus (strain MIT 9515) protein is Ribosomal protein L11 methyltransferase.